The primary structure comprises 205 residues: MTGPTTDADAAVPRRVLIAEDEALIRMDLAEMLREEGYEIVGEAGDGQEAVELAELHKPDLVIMDVKMPRRDGIDAASEIASKRIAPIVVLTAFSQRDLVERARDAGAMAYLVKPFSISDLIPAIELAVSRFREITALEGEVATLSERLETRKLVERAKGLLQTKHGMTEPDAFKWIQRAAMDRRTTMKRVAEVVLETLGTPKDT.

The region spanning 15–129 (RVLIAEDEAL…DLIPAIELAV (115 aa)) is the Response regulatory domain. Asp-65 carries the post-translational modification 4-aspartylphosphate. In terms of domain architecture, ANTAR spans 135–196 (ITALEGEVAT…TMKRVAEVVL (62 aa)).

Phosphorylated and activated by PdtaS.

It localises to the cytoplasm. Its function is as follows. Member of the two-component regulatory system PdtaR/PdtaS. This two-component system plays an essential role in mycobacterial adaptation to poor nutrient conditions. PdtaR probably acts at the level of transcriptional antitermination rather than transcriptional initiation. In terms of biological role, in addition, the PdtaR/PdtaS two-component system controls copper and nitric oxide (NO) resistance downstream of the intramembrane protease Rip1. This coupled Rip1/PdtaS/PdtaR circuit controls NO resistance and acute lung infection in mice by relieving PdtaR/PdtaS-mediated repression of isonitrile chalkophore biosynthesis. Two signals are required to fully inactivate the PdtaR/PdtaS system and mediate NO resistance: a cytoplasmic inhibitory signal through the PdtaS kinase mediated by direct sensing of NO and the production of PPE1-5', an NO-induced small RNA, to sequester PdtaR. The sequence is that of Transcriptional regulatory protein PdtaR (pdtaR) from Mycobacterium tuberculosis (strain CDC 1551 / Oshkosh).